A 75-amino-acid chain; its full sequence is Small integral membrane protein 7-A (75 aa).

Positions 1-17 (MIGDLLLFGTLLVNAGA) are cleaved as a signal peptide. Residues 18–53 (VLNFKLKKKESQGFGDDLTEATTGDNIREFLLSLRY) lie on the Extracellular side of the membrane. The helical transmembrane segment at 54–74 (FRIFIALWNIFMMFCMIVLFG) threads the bilayer. Serine 75 is a topological domain (cytoplasmic).

The protein belongs to the SMIM7 family.

Its subcellular location is the membrane. The sequence is that of Small integral membrane protein 7-A (smim7-a) from Xenopus laevis (African clawed frog).